The chain runs to 169 residues: uncharacterized protein (169 aa).

Residues 10 to 30 form a helical membrane-spanning segment; it reads YFVTILIIIIIILIVLLIVFL. The interval 98–123 is disordered; it reads QSKPINKNNQQTKNTPTPLDDRPDLS. Residues 100–115 are compositionally biased toward low complexity; sequence KPINKNNQQTKNTPTP.

It is found in the membrane. This is an uncharacterized protein from Acanthamoeba polyphaga (Amoeba).